Here is a 329-residue protein sequence, read N- to C-terminus: Porphobilinogen deaminase (329 aa).

Residue Cys-250 is modified to S-(dipyrrolylmethanemethyl)cysteine.

It belongs to the HMBS family. In terms of assembly, monomer. Dipyrromethane is required as a cofactor.

It carries out the reaction 4 porphobilinogen + H2O = hydroxymethylbilane + 4 NH4(+). It participates in porphyrin-containing compound metabolism; protoporphyrin-IX biosynthesis; coproporphyrinogen-III from 5-aminolevulinate: step 2/4. Tetrapolymerization of the monopyrrole PBG into the hydroxymethylbilane pre-uroporphyrinogen in several discrete steps. This Burkholderia mallei (strain NCTC 10247) protein is Porphobilinogen deaminase.